Here is a 125-residue protein sequence, read N- to C-terminus: MLSIFGCVRAVPRVVQMSARRTLKVPAPSQSIPDVEAFLKTIGRDCSELTETFENKWENLFEWDSKTLKSKGVSVQQRRYILHQAQKFRNGEPVKEMKKGKKSFFGGERNRKATVAKWRAEQRNK.

A mitochondrion-targeting transit peptide spans 1-10 (MLSIFGCVRA). The segment at 103-125 (SFFGGERNRKATVAKWRAEQRNK) is disordered.

It belongs to the mitochondrion-specific ribosomal protein mS41 family.

The protein localises to the mitochondrion. In terms of biological role, involved in telomere length regulation. The sequence is that of Small ribosomal subunit protein mS41 (FYV4) from Candida glabrata (strain ATCC 2001 / BCRC 20586 / JCM 3761 / NBRC 0622 / NRRL Y-65 / CBS 138) (Yeast).